The primary structure comprises 291 residues: MRKFTAFACGTGAGLAAFYLQRLRDPKQTAWVHNSWTNSERPVDSWALWDSNWDCRDPKSLVRPQKNEQPQEQNRYNSDFEKNHAKSARHIILIRHGEYLDVGDTDDTHHLTERGREQAKFTGQRLHDLGIKWDKVIASTMVRAQETADIILNEIDYDKAKVTNCAYLREGAPIPPQPPVGHWKPEASQFFRDGARIEAAFRRYFHRAYPDQTKESYTLIVGHGNVIRYFVCRALQFPPEAWLRISINHASITWLTISPSGNVSIKYLGDSGFMPVKHLTNRIPRDAKNVV.

A helical transmembrane segment spans residues 7 to 23; it reads FACGTGAGLAAFYLQRL. The disordered stretch occupies residues 59-78; it reads KSLVRPQKNEQPQEQNRYNS. A compositionally biased stretch (polar residues) spans 67–77; the sequence is NEQPQEQNRYN.

Belongs to the phosphoglycerate mutase family. BPG-dependent PGAM subfamily. Interacts with Pk92B/ASK1.

It localises to the mitochondrion outer membrane. The enzyme catalyses O-phospho-L-seryl-[protein] + H2O = L-seryl-[protein] + phosphate. It catalyses the reaction O-phospho-L-threonyl-[protein] + H2O = L-threonyl-[protein] + phosphate. Functionally, displays phosphatase activity for serine/threonine residues, and dephosphorylates and activates Pk92B kinase. Has apparently no phosphoglycerate mutase activity. The polypeptide is Serine/threonine-protein phosphatase Pgam5, mitochondrial (Drosophila willistoni (Fruit fly)).